We begin with the raw amino-acid sequence, 126 residues long: Fluoride-specific ion channel FluC (126 aa).

The next 4 membrane-spanning stretches (helical) occupy residues 4–24 (FAIL…RYLV), 38–58 (YGTL…IAAF), 71–91 (IIGL…MDNV), and 104–124 (LNVV…FQLL). 2 residues coordinate Na(+): glycine 78 and threonine 81.

The protein belongs to the fluoride channel Fluc/FEX (TC 1.A.43) family.

It localises to the cell inner membrane. The enzyme catalyses fluoride(in) = fluoride(out). With respect to regulation, na(+) is not transported, but it plays an essential structural role and its presence is essential for fluoride channel function. Functionally, fluoride-specific ion channel. Important for reducing fluoride concentration in the cell, thus reducing its toxicity. In Vibrio vulnificus (strain CMCP6), this protein is Fluoride-specific ion channel FluC.